Consider the following 252-residue polypeptide: 3-dehydroquinate dehydratase (252 aa).

3-dehydroquinate-binding positions include Ser-21, 46–48 (EWR), and Arg-82. The active-site Proton donor/acceptor is His-143. Residue Lys-170 is the Schiff-base intermediate with substrate of the active site. 3-dehydroquinate-binding residues include Arg-213, Ser-232, and Gln-236.

It belongs to the type-I 3-dehydroquinase family. Homodimer.

It catalyses the reaction 3-dehydroquinate = 3-dehydroshikimate + H2O. It functions in the pathway metabolic intermediate biosynthesis; chorismate biosynthesis; chorismate from D-erythrose 4-phosphate and phosphoenolpyruvate: step 3/7. In terms of biological role, involved in the third step of the chorismate pathway, which leads to the biosynthesis of aromatic amino acids. Catalyzes the cis-dehydration of 3-dehydroquinate (DHQ) and introduces the first double bond of the aromatic ring to yield 3-dehydroshikimate. This Escherichia coli O17:K52:H18 (strain UMN026 / ExPEC) protein is 3-dehydroquinate dehydratase.